The primary structure comprises 445 residues: Phosphoglucosamine mutase (445 aa).

S102 functions as the Phosphoserine intermediate in the catalytic mechanism. The Mg(2+) site is built by S102, D241, D243, and D245. S102 is subject to Phosphoserine.

Belongs to the phosphohexose mutase family. Mg(2+) is required as a cofactor. In terms of processing, activated by phosphorylation.

The catalysed reaction is alpha-D-glucosamine 1-phosphate = D-glucosamine 6-phosphate. Functionally, catalyzes the conversion of glucosamine-6-phosphate to glucosamine-1-phosphate. This Hahella chejuensis (strain KCTC 2396) protein is Phosphoglucosamine mutase.